Consider the following 292-residue polypeptide: Tumor necrosis factor alpha-induced protein 8-like protein 3 (292 aa).

A disordered region spans residues 81 to 107; sequence DAQPAARSMDSDSGEQSEGEPVTAAGP. The segment at 109–292 is binding to phosphoinositides; it reads VFSSKSLALQ…INKLLDEKVL (184 aa).

Belongs to the TNFAIP8 family. Widely expressed (at protein level). Highly expressed in most carcinoma cell lines.

Its subcellular location is the cytoplasm. It is found in the cell membrane. Acts as a lipid transfer protein. Preferentially captures and shuttles two lipid second messengers, i.e., phosphatidylinositol 4,5- bisphosphate and phosphatidylinositol 3,4,5-trisphosphate and increases their levels in the plasma membrane. Additionally, may also function as a lipid-presenting protein to enhance the activity of the PI3K-AKT and MEK-ERK pathways. May act as a regulator of tumorigenesis through its activation of phospholipid signaling. This Homo sapiens (Human) protein is Tumor necrosis factor alpha-induced protein 8-like protein 3 (TNFAIP8L3).